A 146-amino-acid chain; its full sequence is Probable glycine cleavage system H protein 1, mitochondrial (146 aa).

The transit peptide at 1 to 30 (MLKTLRFGTRAFGQNLNIAKRNFCTRYTND) directs the protein to the mitochondrion. In terms of domain architecture, Lipoyl-binding spans 41-123 (NYRLGITDFA…MGDGWIVEYK (83 aa)). Lys82 is modified (N6-lipoyllysine).

Belongs to the GcvH family. As to quaternary structure, the glycine cleavage system is composed of four proteins: P, T, L and H. (R)-lipoate serves as cofactor.

It is found in the mitochondrion. Functionally, the glycine cleavage system catalyzes the degradation of glycine. The H protein shuttles the methylamine group of glycine from the P protein to the T protein. In Dictyostelium discoideum (Social amoeba), this protein is Probable glycine cleavage system H protein 1, mitochondrial (gcvH1).